The sequence spans 393 residues: Outer membrane protein assembly factor BamB (393 aa).

An N-terminal signal peptide occupies residues 1-19 (MQLRKTLLVGLVSVALLSG). Cysteine 20 carries the N-palmitoyl cysteine lipid modification. A lipid anchor (S-diacylglycerol cysteine) is attached at cysteine 20.

Belongs to the BamB family. As to quaternary structure, part of the Bam complex, which is composed of the outer membrane protein BamA, and four lipoproteins BamB, BamC, BamD and BamE.

It localises to the cell outer membrane. Part of the outer membrane protein assembly complex, which is involved in assembly and insertion of beta-barrel proteins into the outer membrane. This is Outer membrane protein assembly factor BamB from Yersinia pestis.